A 657-amino-acid chain; its full sequence is Histidine ammonia-lyase (657 aa).

The segment at residues 253 to 255 is a cross-link (5-imidazolinone (Ala-Gly)); sequence ASG. 2,3-didehydroalanine (Ser) is present on Ser-254. Thr-396 is subject to Phosphothreonine. Ser-635 carries the phosphoserine modification. Position 637 is a phosphothreonine (Thr-637). Phosphoserine is present on Ser-648.

Belongs to the PAL/histidase family. Post-translationally, contains an active site 4-methylidene-imidazol-5-one (MIO), which is formed autocatalytically by cyclization and dehydration of residues Ala-Ser-Gly.

The catalysed reaction is L-histidine = trans-urocanate + NH4(+). It participates in amino-acid degradation; L-histidine degradation into L-glutamate; N-formimidoyl-L-glutamate from L-histidine: step 1/3. The polypeptide is Histidine ammonia-lyase (Hal) (Mus musculus (Mouse)).